We begin with the raw amino-acid sequence, 44 residues long: Mu-conotoxin-like Cal 12.1.2h (44 aa).

Intrachain disulfides connect C3–C16, C11–C28, C18–C33, and C27–C38. A 6'-bromotryptophan modification is found at W17. At P23 the chain carries 4-hydroxyproline. 2 positions are modified to 6'-bromotryptophan: W36 and W37. P39 carries the post-translational modification 4-hydroxyproline. At W43 the chain carries 6'-bromotryptophan.

As to expression, expressed by the venom duct.

It localises to the secreted. Its function is as follows. Mu-conotoxins block voltage-gated sodium channels. This toxin reversibly blocks voltage-gated sodium channel in cephalopods, with no alteration in the voltage dependence of sodium conductance or on the kinetics of inactivation. The polypeptide is Mu-conotoxin-like Cal 12.1.2h (Californiconus californicus (California cone)).